The primary structure comprises 183 residues: Ribosome-binding factor A (183 aa).

The tract at residues proline 132–glutamate 183 is disordered.

Belongs to the RbfA family. As to quaternary structure, monomer. Binds 30S ribosomal subunits, but not 50S ribosomal subunits or 70S ribosomes.

Its subcellular location is the cytoplasm. One of several proteins that assist in the late maturation steps of the functional core of the 30S ribosomal subunit. Associates with free 30S ribosomal subunits (but not with 30S subunits that are part of 70S ribosomes or polysomes). Required for efficient processing of 16S rRNA. May interact with the 5'-terminal helix region of 16S rRNA. The polypeptide is Ribosome-binding factor A (Mycobacterium tuberculosis (strain ATCC 25177 / H37Ra)).